The chain runs to 151 residues: D-aminoacyl-tRNA deacylase (151 aa).

Residues 142-143 carry the Gly-cisPro motif, important for rejection of L-amino acids motif; sequence GP.

Belongs to the DTD family. Homodimer.

Its subcellular location is the cytoplasm. It carries out the reaction glycyl-tRNA(Ala) + H2O = tRNA(Ala) + glycine + H(+). It catalyses the reaction a D-aminoacyl-tRNA + H2O = a tRNA + a D-alpha-amino acid + H(+). In terms of biological role, an aminoacyl-tRNA editing enzyme that deacylates mischarged D-aminoacyl-tRNAs. Also deacylates mischarged glycyl-tRNA(Ala), protecting cells against glycine mischarging by AlaRS. Acts via tRNA-based rather than protein-based catalysis; rejects L-amino acids rather than detecting D-amino acids in the active site. By recycling D-aminoacyl-tRNA to D-amino acids and free tRNA molecules, this enzyme counteracts the toxicity associated with the formation of D-aminoacyl-tRNA entities in vivo and helps enforce protein L-homochirality. The polypeptide is D-aminoacyl-tRNA deacylase (Psychrobacter cryohalolentis (strain ATCC BAA-1226 / DSM 17306 / VKM B-2378 / K5)).